The chain runs to 419 residues: UDP-N-acetylmuramoylalanine--D-glutamate ligase (419 aa).

109–115 (GSAGKTT) serves as a coordination point for ATP.

This sequence belongs to the MurCDEF family.

Its subcellular location is the cytoplasm. The enzyme catalyses UDP-N-acetyl-alpha-D-muramoyl-L-alanine + D-glutamate + ATP = UDP-N-acetyl-alpha-D-muramoyl-L-alanyl-D-glutamate + ADP + phosphate + H(+). Its pathway is cell wall biogenesis; peptidoglycan biosynthesis. Cell wall formation. Catalyzes the addition of glutamate to the nucleotide precursor UDP-N-acetylmuramoyl-L-alanine (UMA). The protein is UDP-N-acetylmuramoylalanine--D-glutamate ligase of Chlamydia caviae (strain ATCC VR-813 / DSM 19441 / 03DC25 / GPIC) (Chlamydophila caviae).